The following is a 347-amino-acid chain: Protein RecA (347 aa).

An ATP-binding site is contributed by 65–72 (GPESSGKT). A compositionally biased stretch (basic and acidic residues) spans 327–336 (KFEPTELSRE). A disordered region spans residues 327–347 (KFEPTELSREEGDEDTLEDAM). The span at 337–347 (EGDEDTLEDAM) shows a compositional bias: acidic residues.

This sequence belongs to the RecA family.

It localises to the cytoplasm. Can catalyze the hydrolysis of ATP in the presence of single-stranded DNA, the ATP-dependent uptake of single-stranded DNA by duplex DNA, and the ATP-dependent hybridization of homologous single-stranded DNAs. It interacts with LexA causing its activation and leading to its autocatalytic cleavage. The protein is Protein RecA of Xylella fastidiosa (strain M12).